Consider the following 361-residue polypeptide: MIAFISDLHLGNIYANKKETEEHSYNALAKIEEKLLEYQPDLVLVGGDIFDKNKVSGKEIGVFIDFINKMNKNNIGVVSISGNHDGKYWLKESFDHAIPYILYKSGINPENGYEYYSFAGIYLKNSRDWKTLSMIEDKYDISIVGFSFYTKDRLPELYEYLSIIDREKSDYILLMHQSLKSLLPQDPAAIDLTIENYKYALFGHMHMKYYKDKIIVTPPPYSISLKEANTEKGFWLIDKKPVFVPIEDSRPFIKMAIDLDNPIEIKPNKNAILILDVYYRESQIDKLNLLKKTLSENFLYVKINPILKETSKIIVKKSENKEEIFKKYLKEDYDFFMELYEKFRDIKDPETIVQYLEFFYR.

Positions 7, 9, 48, and 83 each coordinate Mn(2+). The active-site Proton donor is the histidine 84. The Mn(2+) site is built by histidine 176, histidine 204, and histidine 206.

The protein belongs to the MRE11/RAD32 family. Homodimer. Forms a heterotetramer composed of two Mre11 subunits and two Rad50 subunits. Requires Mn(2+) as cofactor.

Its activity is regulated as follows. Nuclease activity is regulated by Rad50. Its function is as follows. Part of the Rad50/Mre11 complex, which is involved in the early steps of DNA double-strand break (DSB) repair. The complex may facilitate opening of the processed DNA ends to aid in the recruitment of HerA and NurA. Mre11 binds to DSB ends and has both double-stranded 3'-5' exonuclease activity and single-stranded endonuclease activity. The polypeptide is DNA double-strand break repair protein Mre11 (Nanoarchaeum equitans (strain Kin4-M)).